Here is a 75-residue protein sequence, read N- to C-terminus: Mitotic-spindle organizing protein 1 (75 aa).

Belongs to the MOZART1 family. In terms of assembly, part of the gamma-tubulin complex.

It localises to the cytoplasm. It is found in the cytoskeleton. The protein localises to the microtubule organizing center. Its subcellular location is the centrosome. The protein resides in the spindle. Functionally, required for gamma-tubulin complex recruitment to the centrosome. In Danio rerio (Zebrafish), this protein is Mitotic-spindle organizing protein 1 (mzt1).